The primary structure comprises 382 residues: Dual-specificity RNA methyltransferase RlmN (382 aa).

E96 (proton acceptor) is an active-site residue. Residues 102–342 (QGKRGTLCVS…VRTTRGEDID (241 aa)) enclose the Radical SAM core domain. A disulfide bond links C109 and C345. [4Fe-4S] cluster-binding residues include C116, C120, and C123. S-adenosyl-L-methionine contacts are provided by residues 170–171 (GE), S202, 224–226 (SLH), and N302. The active-site S-methylcysteine intermediate is C345.

This sequence belongs to the radical SAM superfamily. RlmN family. It depends on [4Fe-4S] cluster as a cofactor.

The protein resides in the cytoplasm. The catalysed reaction is adenosine(2503) in 23S rRNA + 2 reduced [2Fe-2S]-[ferredoxin] + 2 S-adenosyl-L-methionine = 2-methyladenosine(2503) in 23S rRNA + 5'-deoxyadenosine + L-methionine + 2 oxidized [2Fe-2S]-[ferredoxin] + S-adenosyl-L-homocysteine. It catalyses the reaction adenosine(37) in tRNA + 2 reduced [2Fe-2S]-[ferredoxin] + 2 S-adenosyl-L-methionine = 2-methyladenosine(37) in tRNA + 5'-deoxyadenosine + L-methionine + 2 oxidized [2Fe-2S]-[ferredoxin] + S-adenosyl-L-homocysteine. Specifically methylates position 2 of adenine 2503 in 23S rRNA and position 2 of adenine 37 in tRNAs. m2A2503 modification seems to play a crucial role in the proofreading step occurring at the peptidyl transferase center and thus would serve to optimize ribosomal fidelity. This Pseudomonas fluorescens (strain SBW25) protein is Dual-specificity RNA methyltransferase RlmN.